A 384-amino-acid polypeptide reads, in one-letter code: Probable inactive linolenate hydroperoxide lyase (384 aa).

Cysteine 346 provides a ligand contact to heme.

It belongs to the cytochrome P450 family. The cofactor is heme. In terms of tissue distribution, expressed in roots, leaves, flowers and siliques.

In Arabidopsis thaliana (Mouse-ear cress), this protein is Probable inactive linolenate hydroperoxide lyase.